The primary structure comprises 268 residues: Syntaxin-22 (268 aa).

A disordered region spans residues 1–23; sequence MSFQDLESGRGRSTRKFNGGRQD. At Ser-2 the chain carries N-acetylserine. At 2-246 the chain is on the cytoplasmic side; that stretch reads SFQDLESGRG…AAKTQKSNSS (245 aa). A t-SNARE coiled-coil homology domain is found at 175–237; the sequence is EAVIEEREQG…SQGKSQLVQA (63 aa). A helical; Anchor for type IV membrane protein transmembrane segment spans residues 247 to 267; that stretch reads LTCLLLVIFGIVLLIVIIVLA. A topological domain (vesicular) is located at residue Ala-268.

Belongs to the syntaxin family. Interacts with VTI11 and SYP51 to form a t-SNARE complex, but not with VPS45. In terms of tissue distribution, expressed in roots, leaves, stems, flower and green siliques.

It is found in the prevacuolar compartment membrane. It localises to the vacuole membrane. May provide the t-SNARE function in the vacuolar assembly. Promotes the formation of vacuolar membrane 'bulbs'. Required for inflorescence stem gravitropism. The protein is Syntaxin-22 (SYP22) of Arabidopsis thaliana (Mouse-ear cress).